Here is a 138-residue protein sequence, read N- to C-terminus: 18 kDa antigen 2 (138 aa).

Residues 21 to 131 (GTRRPAVMPM…KPRRIEINHN (111 aa)) enclose the sHSP domain.

Belongs to the small heat shock protein (HSP20) family.

Its function is as follows. Not known. This protein is one of the major immune reactive proteins in mycobacteria. The chain is 18 kDa antigen 2 from Mycobacterium avium.